The chain runs to 347 residues: Holliday junction branch migration complex subunit RuvB (347 aa).

Residues 1–183 (MTPPSRIVTP…FGIPIRLNFY (183 aa)) are large ATPase domain (RuvB-L). ATP is bound by residues L22, R23, G64, K67, T68, T69, 130-132 (EDF), R173, Y183, and R220. Residue T68 coordinates Mg(2+). The tract at residues 184–254 (TVEELEGIVS…IADHALSALE (71 aa)) is small ATPAse domain (RuvB-S). Positions 257 to 347 (AAGLDAMDRR…QFGLFGGDEE (91 aa)) are head domain (RuvB-H). R293, R312, and R317 together coordinate DNA.

The protein belongs to the RuvB family. In terms of assembly, homohexamer. Forms an RuvA(8)-RuvB(12)-Holliday junction (HJ) complex. HJ DNA is sandwiched between 2 RuvA tetramers; dsDNA enters through RuvA and exits via RuvB. An RuvB hexamer assembles on each DNA strand where it exits the tetramer. Each RuvB hexamer is contacted by two RuvA subunits (via domain III) on 2 adjacent RuvB subunits; this complex drives branch migration. In the full resolvosome a probable DNA-RuvA(4)-RuvB(12)-RuvC(2) complex forms which resolves the HJ.

It is found in the cytoplasm. It catalyses the reaction ATP + H2O = ADP + phosphate + H(+). The RuvA-RuvB-RuvC complex processes Holliday junction (HJ) DNA during genetic recombination and DNA repair, while the RuvA-RuvB complex plays an important role in the rescue of blocked DNA replication forks via replication fork reversal (RFR). RuvA specifically binds to HJ cruciform DNA, conferring on it an open structure. The RuvB hexamer acts as an ATP-dependent pump, pulling dsDNA into and through the RuvAB complex. RuvB forms 2 homohexamers on either side of HJ DNA bound by 1 or 2 RuvA tetramers; 4 subunits per hexamer contact DNA at a time. Coordinated motions by a converter formed by DNA-disengaged RuvB subunits stimulates ATP hydrolysis and nucleotide exchange. Immobilization of the converter enables RuvB to convert the ATP-contained energy into a lever motion, pulling 2 nucleotides of DNA out of the RuvA tetramer per ATP hydrolyzed, thus driving DNA branch migration. The RuvB motors rotate together with the DNA substrate, which together with the progressing nucleotide cycle form the mechanistic basis for DNA recombination by continuous HJ branch migration. Branch migration allows RuvC to scan DNA until it finds its consensus sequence, where it cleaves and resolves cruciform DNA. The polypeptide is Holliday junction branch migration complex subunit RuvB (Rhodopseudomonas palustris (strain BisA53)).